A 248-amino-acid polypeptide reads, in one-letter code: MKSILNDFLLMIQFFTRIPVNKNLQCEKENFRRGAFFLPVVAFIIGGMEFLIYLALKNFLPPNVIIVLLILFTAMITGGLHMDGLADTCDGFFSLRDKERIIEIMKDSRIGSYGTIALIIDLLLKYQLLYSLVLKGYSIAIVLAPIIGRISILFLCLSKRTAKKNGSGNIFIGNMSKPIIFFITTIVLALSTYFLGLRATIIPFIGVLLITYLLYLLCLNKINGLTGDTLGACNELGEITFLLILLMI.

Transmembrane regions (helical) follow at residues 36–56, 59–79, 114–134, 137–157, 170–190, and 199–219; these read FFLP…YLAL, FLPP…ITGG, GTIA…SLVL, YSIA…FLCL, IFIG…VLAL, and ATII…LLCL.

This sequence belongs to the CobS family. Requires Mg(2+) as cofactor.

The protein resides in the cell membrane. The enzyme catalyses alpha-ribazole + adenosylcob(III)inamide-GDP = adenosylcob(III)alamin + GMP + H(+). The catalysed reaction is alpha-ribazole 5'-phosphate + adenosylcob(III)inamide-GDP = adenosylcob(III)alamin 5'-phosphate + GMP + H(+). Its pathway is cofactor biosynthesis; adenosylcobalamin biosynthesis; adenosylcobalamin from cob(II)yrinate a,c-diamide: step 7/7. Functionally, joins adenosylcobinamide-GDP and alpha-ribazole to generate adenosylcobalamin (Ado-cobalamin). Also synthesizes adenosylcobalamin 5'-phosphate from adenosylcobinamide-GDP and alpha-ribazole 5'-phosphate. The chain is Adenosylcobinamide-GDP ribazoletransferase from Clostridium botulinum (strain Okra / Type B1).